We begin with the raw amino-acid sequence, 143 residues long: Nucleoside diphosphate kinase (143 aa).

ATP is bound by residues Lys11, Phe59, Arg87, Thr93, Arg104, and Asn114. His117 (pros-phosphohistidine intermediate) is an active-site residue.

It belongs to the NDK family. As to quaternary structure, homotetramer. Mg(2+) is required as a cofactor.

Its subcellular location is the cytoplasm. It carries out the reaction a 2'-deoxyribonucleoside 5'-diphosphate + ATP = a 2'-deoxyribonucleoside 5'-triphosphate + ADP. The enzyme catalyses a ribonucleoside 5'-diphosphate + ATP = a ribonucleoside 5'-triphosphate + ADP. Its function is as follows. Major role in the synthesis of nucleoside triphosphates other than ATP. The ATP gamma phosphate is transferred to the NDP beta phosphate via a ping-pong mechanism, using a phosphorylated active-site intermediate. This chain is Nucleoside diphosphate kinase, found in Pseudoalteromonas translucida (strain TAC 125).